Reading from the N-terminus, the 356-residue chain is Glycerol-1-phosphate dehydrogenase [NAD(P)+] (356 aa).

Residues 103–107 (GRSID) and 125–128 (TAAS) contribute to the NAD(+) site. A substrate-binding site is contributed by aspartate 130. An NAD(+)-binding site is contributed by serine 134. Residue aspartate 177 participates in substrate binding. Residues aspartate 177 and histidine 257 each coordinate Zn(2+). Histidine 261 lines the substrate pocket. Histidine 273 provides a ligand contact to Zn(2+).

It belongs to the glycerol-1-phosphate dehydrogenase family. The cofactor is Zn(2+).

It localises to the cytoplasm. It catalyses the reaction sn-glycerol 1-phosphate + NAD(+) = dihydroxyacetone phosphate + NADH + H(+). The enzyme catalyses sn-glycerol 1-phosphate + NADP(+) = dihydroxyacetone phosphate + NADPH + H(+). It participates in membrane lipid metabolism; glycerophospholipid metabolism. In terms of biological role, catalyzes the NAD(P)H-dependent reduction of dihydroxyacetonephosphate (DHAP or glycerone phosphate) to glycerol 1-phosphate (G1P). The G1P thus generated is used as the glycerophosphate backbone of phospholipids in the cellular membranes of Archaea. This chain is Glycerol-1-phosphate dehydrogenase [NAD(P)+], found in Methanosarcina barkeri (strain Fusaro / DSM 804).